The following is a 374-amino-acid chain: Tetraacyldisaccharide 4'-kinase (374 aa).

66-73 (TAGGTGKT) is a binding site for ATP.

The protein belongs to the LpxK family.

It catalyses the reaction a lipid A disaccharide + ATP = a lipid IVA + ADP + H(+). The protein operates within glycolipid biosynthesis; lipid IV(A) biosynthesis; lipid IV(A) from (3R)-3-hydroxytetradecanoyl-[acyl-carrier-protein] and UDP-N-acetyl-alpha-D-glucosamine: step 6/6. Its function is as follows. Transfers the gamma-phosphate of ATP to the 4'-position of a tetraacyldisaccharide 1-phosphate intermediate (termed DS-1-P) to form tetraacyldisaccharide 1,4'-bis-phosphate (lipid IVA). The sequence is that of Tetraacyldisaccharide 4'-kinase from Syntrophus aciditrophicus (strain SB).